Consider the following 36-residue polypeptide: Pancreatic polypeptide (36 aa).

Tyr-36 bears the Tyrosine amide mark.

The protein belongs to the NPY family.

The protein localises to the secreted. Hormone secreted by pancreatic cells that acts as a regulator of pancreatic and gastrointestinal functions probably by signaling through the G protein-coupled receptor NPY4R2. This Chinchilla chinchilla (Short-tailed chinchilla) protein is Pancreatic polypeptide (PPY).